A 220-amino-acid polypeptide reads, in one-letter code: Metalloproteinase inhibitor 2 (220 aa).

Positions 1 to 26 (MGAAARSLRLALGLLLLATLLRPADA) are cleaved as a signal peptide. Zn(2+) is bound at residue cysteine 27. Involved in metalloproteinase-binding stretches follow at residues 27–30 (CSCS) and 95–96 (SA). Cystine bridges form between cysteine 27–cysteine 98, cysteine 29–cysteine 127, cysteine 39–cysteine 152, cysteine 154–cysteine 201, cysteine 159–cysteine 164, and cysteine 172–cysteine 193. Positions 27-152 (CSCSPVHPQQ…SLNHRYQMGC (126 aa)) constitute an NTR domain.

It belongs to the protease inhibitor I35 (TIMP) family. As to quaternary structure, interacts (via the C-terminal) with MMP2 (via the C-terminal PEX domain); the interaction inhibits the MMP2 activity. The activity of TIMP2 is dependent on the presence of disulfide bonds.

Its subcellular location is the secreted. Its function is as follows. Complexes with metalloproteinases (such as collagenases) and irreversibly inactivates them by binding to their catalytic zinc cofactor. The chain is Metalloproteinase inhibitor 2 (Timp2) from Rattus norvegicus (Rat).